The primary structure comprises 301 residues: 2-phosphoglycerate kinase (301 aa).

In terms of domain architecture, ATP-cone spans 2-89 (IRVIEKGDKV…FWRRFRKMKV (88 aa)).

Belongs to the 2-phosphoglycerate kinase family. The cofactor is a divalent metal cation.

It catalyses the reaction (2R)-2-phosphoglycerate + ATP = (2R)-2,3-bisphosphoglycerate + ADP + H(+). It participates in thermoadapter biosynthesis; cyclic 2,3-diphosphoglycerate biosynthesis; cyclic 2,3-diphosphoglycerate from 2-phospho-D-glycerate: step 1/2. Catalyzes the phosphorylation of 2-phosphoglycerate to 2,3-diphosphoglycerate. Involved in the biosynthesis of cyclic 2,3-bisphosphoglycerate, a thermoprotectant. The chain is 2-phosphoglycerate kinase from Pyrococcus horikoshii (strain ATCC 700860 / DSM 12428 / JCM 9974 / NBRC 100139 / OT-3).